We begin with the raw amino-acid sequence, 241 residues long: Purine nucleoside phosphorylase DeoD-type (241 aa).

Residue histidine 5 participates in a purine D-ribonucleoside binding. Residues glycine 21, arginine 25, arginine 44, and 88–91 each bind phosphate; that span reads RVGS. A purine D-ribonucleoside-binding positions include 180–182 and 204–205; these read EME and SD. Residue aspartate 205 is the Proton donor of the active site.

Belongs to the PNP/UDP phosphorylase family. In terms of assembly, homohexamer; trimer of homodimers.

The enzyme catalyses a purine D-ribonucleoside + phosphate = a purine nucleobase + alpha-D-ribose 1-phosphate. It carries out the reaction a purine 2'-deoxy-D-ribonucleoside + phosphate = a purine nucleobase + 2-deoxy-alpha-D-ribose 1-phosphate. Catalyzes the reversible phosphorolytic breakdown of the N-glycosidic bond in the beta-(deoxy)ribonucleoside molecules, with the formation of the corresponding free purine bases and pentose-1-phosphate. The chain is Purine nucleoside phosphorylase DeoD-type from Yersinia enterocolitica serotype O:8 / biotype 1B (strain NCTC 13174 / 8081).